We begin with the raw amino-acid sequence, 590 residues long: MHRYRTHTCGALTEAQVGDTVRVSGWCHRIRDHGGVLFVDLRDHYGLTQVVFDPDSAAFAAAEKVRAEWVIRVDGRVRLRPEGTENSELATGKVEIYATDLEVLGPAAELPLPVFGDQDYPEDIRLRYRFLDLRRERIHGNIMKRGQIIDSLRQRMKGQGFFEFQTPILTASSPEGARDFLVPSRIHPGKFYALPQAPQQYKQLIMMSGFDRYFQIAPCFRDEDPRADRLPGEFYQLDLEMSFVTQDDVFAAVEPVIRGVFEEFGGGKPVTQNWPRIPYAEALRKYGSDKPDLRNPLVMQNVSEHFRGSNFKVFARLLEDPKNEVWAIPGPTGGSRAFCDRMNSWAQGEGQPGLGYIMWREGGEGAGPLANNIGPERTAAIREQLGLKDGDAAFFVAGNPEKFYKFAGLARTKVGEELKLIDTERFELAWIVDFPFYEWSDEEKKIDFSHNPFSMPQGGLEALNGQDPLTIKAFQYDIACNGYEIASGGIRNHRPEAMVKAFELAGYDEATVIERFGGMYRAFQYGAPPHGGMAAGIDRIVMLLCGVSNLREISLFPMNQQALDLLMGAPNEATPKQMKELHIRPALPAK.

Glu175 serves as a coordination point for L-aspartate. Residues 199–202 (QQYK) are aspartate. The L-aspartate site is built by Arg221 and His450. 221-223 (RDE) contacts ATP. Glu484 contributes to the ATP binding site. Arg491 provides a ligand contact to L-aspartate. 536-539 (GIDR) is a binding site for ATP.

The protein belongs to the class-II aminoacyl-tRNA synthetase family. Type 1 subfamily. Homodimer.

The protein resides in the cytoplasm. The enzyme catalyses tRNA(Asx) + L-aspartate + ATP = L-aspartyl-tRNA(Asx) + AMP + diphosphate. Its function is as follows. Aspartyl-tRNA synthetase with relaxed tRNA specificity since it is able to aspartylate not only its cognate tRNA(Asp) but also tRNA(Asn). Reaction proceeds in two steps: L-aspartate is first activated by ATP to form Asp-AMP and then transferred to the acceptor end of tRNA(Asp/Asn). In Azorhizobium caulinodans (strain ATCC 43989 / DSM 5975 / JCM 20966 / LMG 6465 / NBRC 14845 / NCIMB 13405 / ORS 571), this protein is Aspartate--tRNA(Asp/Asn) ligase.